The chain runs to 190 residues: Elongation factor P-like protein (190 aa).

This sequence belongs to the elongation factor P family.

The sequence is that of Elongation factor P-like protein from Yersinia pestis bv. Antiqua (strain Antiqua).